The sequence spans 508 residues: Photosystem II CP47 reaction center protein (508 aa).

The next 6 membrane-spanning stretches (helical) occupy residues S21–S36, I101–W115, G140–F156, I203–L218, V237–V252, and S457–R472.

It belongs to the PsbB/PsbC family. PsbB subfamily. PSII is composed of 1 copy each of membrane proteins PsbA, PsbB, PsbC, PsbD, PsbE, PsbF, PsbH, PsbI, PsbJ, PsbK, PsbL, PsbM, PsbT, PsbY, PsbZ, Psb30/Ycf12, at least 3 peripheral proteins of the oxygen-evolving complex and a large number of cofactors. It forms dimeric complexes. Requires Binds multiple chlorophylls. PSII binds additional chlorophylls, carotenoids and specific lipids. as cofactor.

Its subcellular location is the plastid. The protein localises to the chloroplast thylakoid membrane. Functionally, one of the components of the core complex of photosystem II (PSII). It binds chlorophyll and helps catalyze the primary light-induced photochemical processes of PSII. PSII is a light-driven water:plastoquinone oxidoreductase, using light energy to abstract electrons from H(2)O, generating O(2) and a proton gradient subsequently used for ATP formation. The polypeptide is Photosystem II CP47 reaction center protein (Euglena gracilis).